An 88-amino-acid polypeptide reads, in one-letter code: Protein E7 (88 aa).

The E7 terminal domain stretch occupies residues 1 to 37 (MVGEQPNIGDLVSQEEPSVLDLNCYEDIPAEEEESEY). The LXCXE motif; interaction with host RB1 and TMEM173/STING signature appears at 22-26 (LNCYE). Residues 45–81 (CGLCDQLLRLTCVSDLSTLTRLEELLLGSLRIVCPLC) fold into a zinc finger. The Nuclear export signal signature appears at 63 to 71 (LTRLEELLL).

Belongs to the papillomaviridae E7 protein family. Homodimer. Homooligomer. Interacts with host RB1; this interaction induces dissociation of RB1-E2F1 complex thereby disrupting RB1 activity. Interacts with host EP300; this interaction represses EP300 transcriptional activity. Interacts with protein E2; this interaction inhibits E7 oncogenic activity. Interacts with host TMEM173/STING; this interaction impairs the ability of TMEM173/STING to sense cytosolic DNA and promote the production of type I interferon (IFN-alpha and IFN-beta). Highly phosphorylated.

Its subcellular location is the host cytoplasm. The protein resides in the host nucleus. Its function is as follows. Plays a role in viral genome replication by driving entry of quiescent cells into the cell cycle. Stimulation of progression from G1 to S phase allows the virus to efficiently use the cellular DNA replicating machinery to achieve viral genome replication. E7 protein has both transforming and trans-activating activities. Induces the disassembly of the E2F1 transcription factor from RB1, with subsequent transcriptional activation of E2F1-regulated S-phase genes. Interferes with host histone deacetylation mediated by HDAC1 and HDAC2, leading to transcription activation. Also plays a role in the inhibition of both antiviral and antiproliferative functions of host interferon alpha. Interaction with host TMEM173/STING impairs the ability of TMEM173/STING to sense cytosolic DNA and promote the production of type I interferon (IFN-alpha and IFN-beta). The sequence is that of Protein E7 from Human papillomavirus type 63.